We begin with the raw amino-acid sequence, 416 residues long: UDP-N-acetylglucosamine 1-carboxyvinyltransferase (416 aa).

22-23 provides a ligand contact to phosphoenolpyruvate; it reads KN. A UDP-N-acetyl-alpha-D-glucosamine-binding site is contributed by Arg-92. Cys-116 serves as the catalytic Proton donor. 2-(S-cysteinyl)pyruvic acid O-phosphothioketal is present on Cys-116. Residues 121-125, Asp-304, and Ile-326 contribute to the UDP-N-acetyl-alpha-D-glucosamine site; that span reads RPVDQ.

It belongs to the EPSP synthase family. MurA subfamily.

The protein localises to the cytoplasm. It catalyses the reaction phosphoenolpyruvate + UDP-N-acetyl-alpha-D-glucosamine = UDP-N-acetyl-3-O-(1-carboxyvinyl)-alpha-D-glucosamine + phosphate. It participates in cell wall biogenesis; peptidoglycan biosynthesis. Cell wall formation. Adds enolpyruvyl to UDP-N-acetylglucosamine. This chain is UDP-N-acetylglucosamine 1-carboxyvinyltransferase, found in Aromatoleum aromaticum (strain DSM 19018 / LMG 30748 / EbN1) (Azoarcus sp. (strain EbN1)).